Reading from the N-terminus, the 547-residue chain is MGIKQHNGNTKADRLAELKIRSPSIQLIKFGAIGLNAILFSPLLIAADTGSQYGTNITINDGDRITGDTADPSGNLYGVMTPAGNTPGNINLGNDVTVNVNDASGYAKGIIIQGKNSSLTANRLTVDVVGQTSAIGINLIGDYTHADLGTGSTIKSNDDGIIIGHSSTLTATQFTIENSNGIGLTINDYGTSVDLGSGSKIKTDGSTGVYIGGLNGNNANGAARFTATDLTIDVQGYSAMGINVQKNSVVDLGTNSSIKTSGDNAHGLWSFGQVSANALTVDVTGAAANGVEVRGGTTTIGADSHISSAQGGGLVTSGSDATINFSGTAAQRNSIFSGGSYGASAQTATAVINMQNTDITVDRNGSLALGLWALSGGRITGDSLAITGAAGARGIYAMTNSQIDLTSDLVIDMSTPDQMAIATQHDDGYAASRINASGRMLINGSVLSKGGLINLDMHPGSVWTGSSLSDNVNGGKLDVAMNNSVWNVTSNSNLDTLALSHSTVDFASHGSTAGTFTTLNVENLSGNSTFIMRADVVGEGNGVKPWA.

It to B.pertussis prn N-terminal region.

This is an uncharacterized protein from Escherichia coli O157:H7.